The following is a 199-amino-acid chain: NADH-quinone oxidoreductase subunit C (199 aa).

This sequence belongs to the complex I 30 kDa subunit family. As to quaternary structure, NDH-1 is composed of 14 different subunits. Subunits NuoB, C, D, E, F, and G constitute the peripheral sector of the complex.

Its subcellular location is the cell inner membrane. It carries out the reaction a quinone + NADH + 5 H(+)(in) = a quinol + NAD(+) + 4 H(+)(out). Its function is as follows. NDH-1 shuttles electrons from NADH, via FMN and iron-sulfur (Fe-S) centers, to quinones in the respiratory chain. The immediate electron acceptor for the enzyme in this species is believed to be ubiquinone. Couples the redox reaction to proton translocation (for every two electrons transferred, four hydrogen ions are translocated across the cytoplasmic membrane), and thus conserves the redox energy in a proton gradient. In Leptothrix cholodnii (strain ATCC 51168 / LMG 8142 / SP-6) (Leptothrix discophora (strain SP-6)), this protein is NADH-quinone oxidoreductase subunit C.